A 319-amino-acid chain; its full sequence is Serine/threonine-protein phosphatase PP1 isozyme 2 (319 aa).

Residues aspartate 61, histidine 63, aspartate 89, and asparagine 121 each coordinate Mn(2+). Histidine 122 acts as the Proton donor in catalysis. 2 residues coordinate Mn(2+): histidine 170 and histidine 245.

It belongs to the PPP phosphatase family. PP-1 subfamily. The cofactor is Mn(2+).

The catalysed reaction is O-phospho-L-seryl-[protein] + H2O = L-seryl-[protein] + phosphate. The enzyme catalyses O-phospho-L-threonyl-[protein] + H2O = L-threonyl-[protein] + phosphate. The protein is Serine/threonine-protein phosphatase PP1 isozyme 2 of Acetabularia peniculus (Green alga).